Consider the following 300-residue polypeptide: Porphobilinogen deaminase (300 aa).

S-(dipyrrolylmethanemethyl)cysteine is present on Cys-239.

Belongs to the HMBS family. Monomer. It depends on dipyrromethane as a cofactor.

It catalyses the reaction 4 porphobilinogen + H2O = hydroxymethylbilane + 4 NH4(+). It participates in porphyrin-containing compound metabolism; protoporphyrin-IX biosynthesis; coproporphyrinogen-III from 5-aminolevulinate: step 2/4. Functionally, tetrapolymerization of the monopyrrole PBG into the hydroxymethylbilane pre-uroporphyrinogen in several discrete steps. The protein is Porphobilinogen deaminase of Francisella tularensis subsp. holarctica (strain OSU18).